An 80-amino-acid polypeptide reads, in one-letter code: Protein KorB (80 aa).

2 consecutive DNA-binding regions (H-T-H motif) follow at residues 13-32 (AEAA…AELD) and 56-75 (NEVT…AEAE).

Repressor for the transcription of certain pIJ101 promoters, including those the from kilA and kilB loci. In Streptomyces lividans, this protein is Protein KorB (korB).